The primary structure comprises 81 residues: Photosystem I iron-sulfur center (81 aa).

4Fe-4S ferredoxin-type domains lie at 2-31 (AHSV…MVPW) and 39-68 (IASA…VRVY). Residues Cys-11, Cys-14, Cys-17, Cys-21, Cys-48, Cys-51, Cys-54, and Cys-58 each coordinate [4Fe-4S] cluster.

The eukaryotic PSI reaction center is composed of at least 11 subunits. [4Fe-4S] cluster serves as cofactor.

The protein localises to the plastid. The protein resides in the chloroplast thylakoid membrane. It catalyses the reaction reduced [plastocyanin] + hnu + oxidized [2Fe-2S]-[ferredoxin] = oxidized [plastocyanin] + reduced [2Fe-2S]-[ferredoxin]. Functionally, apoprotein for the two 4Fe-4S centers FA and FB of photosystem I (PSI); essential for photochemical activity. FB is the terminal electron acceptor of PSI, donating electrons to ferredoxin. The C-terminus interacts with PsaA/B/D and helps assemble the protein into the PSI complex. Required for binding of PsaD and PsaE to PSI. PSI is a plastocyanin-ferredoxin oxidoreductase, converting photonic excitation into a charge separation, which transfers an electron from the donor P700 chlorophyll pair to the spectroscopically characterized acceptors A0, A1, FX, FA and FB in turn. The protein is Photosystem I iron-sulfur center of Chlorokybus atmophyticus (Soil alga).